Consider the following 366-residue polypeptide: Alanine racemase (366 aa).

Residue lysine 40 is the Proton acceptor; specific for D-alanine of the active site. Lysine 40 carries the post-translational modification N6-(pyridoxal phosphate)lysine. Arginine 136 provides a ligand contact to substrate. Catalysis depends on tyrosine 263, which acts as the Proton acceptor; specific for L-alanine. Position 310 (methionine 310) interacts with substrate.

It belongs to the alanine racemase family. Pyridoxal 5'-phosphate is required as a cofactor.

It catalyses the reaction L-alanine = D-alanine. It participates in amino-acid biosynthesis; D-alanine biosynthesis; D-alanine from L-alanine: step 1/1. Its function is as follows. Catalyzes the interconversion of L-alanine and D-alanine. May also act on other amino acids. In Streptococcus pyogenes serotype M28 (strain MGAS6180), this protein is Alanine racemase (alr).